We begin with the raw amino-acid sequence, 249 residues long: Putative TrmH family tRNA/rRNA methyltransferase (249 aa).

3 residues coordinate S-adenosyl-L-methionine: glycine 196, isoleucine 216, and leucine 225.

This sequence belongs to the class IV-like SAM-binding methyltransferase superfamily. RNA methyltransferase TrmH family.

In Staphylococcus epidermidis (strain ATCC 35984 / DSM 28319 / BCRC 17069 / CCUG 31568 / BM 3577 / RP62A), this protein is Putative TrmH family tRNA/rRNA methyltransferase.